The sequence spans 165 residues: Inorganic pyrophosphatase (165 aa).

Substrate is bound by residues Lys-21, Arg-35, and Tyr-47. Mg(2+) is bound by residues Asp-57, Asp-62, and Asp-94. Tyr-131 is a substrate binding site.

Belongs to the PPase family. Homotrimer. In presence of divalent cations the trimers aggregate to form a hexamer. Mg(2+) serves as cofactor.

The protein resides in the cytoplasm. It carries out the reaction diphosphate + H2O = 2 phosphate + H(+). Functionally, catalyzes the hydrolysis of inorganic pyrophosphate (PPi) forming two phosphate ions. The polypeptide is Inorganic pyrophosphatase (Bacillus sp. (strain PS3)).